A 78-amino-acid chain; its full sequence is UPF0291 protein ABC2165 (78 aa).

The disordered stretch occupies residues 56–78 (AKGNDVTPQKLKDSKAQKHKRLH).

This sequence belongs to the UPF0291 family.

The protein resides in the cytoplasm. This is UPF0291 protein ABC2165 from Shouchella clausii (strain KSM-K16) (Alkalihalobacillus clausii).